Consider the following 389-residue polypeptide: Probable peptide chain release factor 1, mitochondrial (389 aa).

Residue Gln-259 is modified to N5-methylglutamine.

Belongs to the prokaryotic/mitochondrial release factor family. Post-translationally, methylation of glutamine in the GGQ triplet is conserved from bacteria to mammals.

It localises to the mitochondrion. Functionally, mitochondrial peptide chain release factor that directs the termination of translation in response to the peptide chain termination codons UAA and UAG. In Caenorhabditis elegans, this protein is Probable peptide chain release factor 1, mitochondrial.